Consider the following 1083-residue polypeptide: Centrosomal protein of 131 kDa (1083 aa).

Disordered stretches follow at residues 1 to 155 (MKGT…AGPR) and 220 to 258 (GSES…EVTE). The tract at residues 1 to 250 (MKGTRAIGSV…RNNTGGSTGL (250 aa)) is interaction with PLK4. Residues S14 and S35 each carry the phosphoserine modification. Phosphoserine; by MAPKAPK2 is present on S47. Positions 68–87 (QAINNLRRSNSTTQVSQPRS) are enriched in polar residues. Position 78 is a phosphoserine; by MAPKAPK2 and PLK4 (S78). Phosphoserine is present on residues S89, S105, S114, S146, and S150. Residues 138-148 (LPSNARSSSAL) show a composition bias toward polar residues. The segment covering 232–245 (NVSSATHSARNNTG) has biased composition (polar residues). Residues 269-289 (NQATVTIQRWYRHQVQRRGAG) enclose the IQ domain. The tract at residues 301-429 (REEQRQRSGE…PQQPPEDRTQ (129 aa)) is disordered. Composition is skewed to basic and acidic residues over residues 317–333 (HQQK…EKAR) and 360–369 (GPPENPRETR). S381 carries the post-translational modification Phosphoserine. A Phosphothreonine modification is found at T383. 6 positions are modified to phosphoserine: S453, S489, D496, S499, S731, and S798. Basic and acidic residues predominate over residues 1047–1076 (KEEAVSSLRTQHEAAVKRADHLEELLEQHR). Residues 1047-1083 (KEEAVSSLRTQHEAAVKRADHLEELLEQHRRPTPSTK) form a disordered region.

This sequence belongs to the CEP131 family. Self-associates. Associates with the centriolar satellite BBSome protein complex. Interacts with BBS4; the interaction limits BBS4 availability for association with the BBSome complex, and hence negatively regulates ciliary localization of the BBSome complex. Interacts with MIB1. Interacts with PCM1; the interaction increases in response to ultraviolet light (UV) radiation. Associates with microtubules; association with microtubules is reduced in response to cellular stress, such as UV stimulation, in a process that requires p38 MAP kinase signaling. Interacts with CEP290, DCTN1, PCNT, PCM1 and CEP152. Interacts with 14-3-3 proteins following UV-induced phosphorylation by MAPKAPK2; this inhibits formation of novel centriolar satellites. Interacts with SDCCAG8. Interacts with CCDC61. Interacts with PLK4. Ubiquitinated. Undergoes monoubiquitination catalyzed by the E3 ubiquitin-protein ligase MIB1 in proliferating cells, preventing cilia formation. Monoubiquitination by MIB1 is inhibited in response to cellular stress, such as ultraviolet light (UV) radiation or heat shock, resulting in cilia formation initiation. Post-translationally, MAPKAPK2-dependent phosphorylation at Ser-47 and Ser-78 occurs in response to cellular stress such as exposure to ultraviolet irradiation and promotes binding to 14-3-3 proteins which leads to cytoplasmic sequestration of CEP131 and blocks formation of new centriolar satellites. Phosphorylation at Ser-78 mediated by PLK4 is essential for proper organization and integrity of centriolar satellites but is dispensable for its localization to centrioles and its function in ciliogenesis.

The protein resides in the cytoplasm. Its subcellular location is the cytoskeleton. The protein localises to the microtubule organizing center. It localises to the centrosome. It is found in the centriolar satellite. The protein resides in the centriole. Its subcellular location is the cilium basal body. The protein localises to the cytoplasmic vesicle. It localises to the secretory vesicle. It is found in the acrosome. In terms of biological role, component of centriolar satellites contributing to the building of a complex and dynamic network required to regulate cilia/flagellum formation. In proliferating cells, MIB1-mediated ubiquitination induces its sequestration within centriolar satellites, precluding untimely cilia formation initiation. In contrast, during normal and ultraviolet or heat shock cellular stress-induced ciliogenesis, its non-ubiquitinated form is rapidly displaced from centriolar satellites and recruited to centrosome/basal bodies in a microtubule- and p38 MAPK-dependent manner. Also acts as a negative regulator of BBSome ciliary trafficking. Plays a role in sperm flagellar formation; may be involved in the regulation of intraflagellar transport (IFT) and/or intramanchette (IMT) trafficking, which are important for axoneme extension and/or cargo delivery to the nascent sperm tail. Required for optimal cell proliferation and cell cycle progression; may play a role in the regulation of genome stability in non-ciliogenic cells. Involved in centriole duplication. Required for CEP152, WDR62 and CEP63 centrosomal localization and promotes the centrosomal localization of CDK2. Essential for maintaining proper centriolar satellite integrity. This is Centrosomal protein of 131 kDa (CEP131) from Homo sapiens (Human).